We begin with the raw amino-acid sequence, 798 residues long: ABC transporter G family member 4 (798 aa).

The tract at residues 1-51 (MEDIGNNNFEIIDDKSDEKNDENFEDKNSRNNINEEQILSNQQQQQQQQQQ) is disordered. The segment covering 12 to 29 (IDDKSDEKNDENFEDKNS) has biased composition (basic and acidic residues). Residues 30 to 41 (RNNINEEQILSN) are compositionally biased toward polar residues. Residues 34–83 (NEEQILSNQQQQQQQQQQQQQQQQQQQQQQQQQQQQQQEQQQFKNEVINT) adopt a coiled-coil conformation. Residues 42–51 (QQQQQQQQQQ) show a composition bias toward low complexity. In terms of domain architecture, ABC transporter spans 211–464 (IDIEDIESQV…SIDSNYKCPP (254 aa)). 253 to 260 (GPSGSGKS) contacts ATP. The next 7 membrane-spanning stretches (helical) occupy residues 540–560 (VVFF…SACF), 579–599 (LFFF…STFV), 628–648 (IVSS…IVHL), 656–676 (ILSL…VIAM), 687–707 (FSYC…LVPI), 713–733 (SFGW…IVII), and 771–791 (SIGI…IGLY). An ABC transmembrane type-2 domain is found at 540-793 (VVFFSKIVIA…ILAYIGLYKF (254 aa)).

This sequence belongs to the ABC transporter superfamily. ABCG family. Eye pigment precursor importer (TC 3.A.1.204) subfamily.

It localises to the membrane. The chain is ABC transporter G family member 4 (abcG4) from Dictyostelium discoideum (Social amoeba).